The chain runs to 607 residues: ATP-dependent RNA helicase dbp9 (607 aa).

Positions Val-24–Ser-52 match the Q motif motif. The 178-residue stretch at Ile-55–Leu-232 folds into the Helicase ATP-binding domain. Ala-68–Thr-75 contacts ATP. The DEAD box motif lies at Asp-180 to Asp-183. Residues Gly-243–Lys-475 enclose the Helicase C-terminal domain. The segment covering Val-332 to Asp-343 has biased composition (basic and acidic residues). Disordered regions lie at residues Val-332–Asp-380 and Thr-573–Lys-607. The segment covering Ala-344–Lys-356 has biased composition (acidic residues). A compositionally biased stretch (basic and acidic residues) spans Glu-357 to Gln-368. Basic residues predominate over residues Arg-578–Gly-592.

It belongs to the DEAD box helicase family. DDX56/DBP9 subfamily.

It is found in the nucleus. The protein localises to the nucleolus. The enzyme catalyses ATP + H2O = ADP + phosphate + H(+). In terms of biological role, ATP-binding RNA helicase involved in the biogenesis of 60S ribosomal subunits and is required for the normal formation of 25S and 5.8S rRNAs. This is ATP-dependent RNA helicase dbp9 (dbp9) from Botryotinia fuckeliana (strain B05.10) (Noble rot fungus).